Consider the following 295-residue polypeptide: Protein FAM110A (295 aa).

2 disordered regions span residues 117–148 (PVSP…PPSI) and 160–191 (PASP…KSDL). Pro residues-rich tracts occupy residues 138-147 (LATPPRPPPS) and 160-171 (PASPIQPCPSPG).

It belongs to the FAM110 family. As to quaternary structure, may interact with CSPP1.

The protein localises to the cytoplasm. The protein resides in the cytoskeleton. It is found in the microtubule organizing center. Its subcellular location is the centrosome. It localises to the spindle pole. The protein is Protein FAM110A (FAM110A) of Bos taurus (Bovine).